The following is a 408-amino-acid chain: Mitochondrial outer membrane protein SLC25A46 (408 aa).

2 disordered regions span residues 1-23 (MHPRRPEGFDGLGYRGGGREEPC) and 52-80 (HWGEKTPPYGAGTPLGAAGLNEEPGLGAG). Positions 66-76 (LGAAGLNEEPG) are enriched in low complexity. The Solcar 1 repeat unit spans residues 86-177 (QLNRFAGFGI…GIISEFTPLP (92 aa)). The next 6 helical transmembrane spans lie at 93–113 (FGIGLASLFTENVLAHPCIVL), 157–177 (FIVQGITLGTEGIISEFTPLP), 189–209 (IGGHLLLKGLTHVIAMPFYSA), 248–268 (LLPLMVLIFPTALHGVLHYVI), 304–324 (FPELIASFAASLCADVMLYPL), and 373–393 (LGFYKGFGAVVVQYTLHVAVL). Residues 301-403 (DAYFPELIAS…QLTKIIYSTL (103 aa)) form a Solcar 2 repeat.

It belongs to the mitochondrial carrier (TC 2.A.29) family.

Its subcellular location is the mitochondrion outer membrane. Transmembrane protein of the mitochondrial outer membrane that controls mitochondrial organization. May regulate the assembly of the MICOS (mitochondrial contact site and cristae organizing system) complex which is essential to the biogenesis and dynamics of mitochondrial cristae, the inwards folds of the inner mitochondrial membrane. Through its interaction with the EMC (endoplasmic reticulum membrane protein complex), could regulate mitochondrial lipid homeostasis and thereby mitochondrial fission. This chain is Mitochondrial outer membrane protein SLC25A46, found in Gallus gallus (Chicken).